The sequence spans 348 residues: Large ribosomal subunit protein uL3m (348 aa).

Residues 1–40 constitute a mitochondrion transit peptide; the sequence is MPGWRLLAWAGARVLDRGTGGLGTALGSGNRTDICVLVRS.

This sequence belongs to the universal ribosomal protein uL3 family. Component of the mitochondrial ribosome large subunit (39S) which comprises a 16S rRNA and about 50 distinct proteins.

It is found in the mitochondrion. The sequence is that of Large ribosomal subunit protein uL3m (MRPL3) from Bos taurus (Bovine).